Here is a 466-residue protein sequence, read N- to C-terminus: Exodeoxyribonuclease 7 large subunit (466 aa).

The protein belongs to the XseA family. As to quaternary structure, heterooligomer composed of large and small subunits.

It localises to the cytoplasm. The catalysed reaction is Exonucleolytic cleavage in either 5'- to 3'- or 3'- to 5'-direction to yield nucleoside 5'-phosphates.. Its function is as follows. Bidirectionally degrades single-stranded DNA into large acid-insoluble oligonucleotides, which are then degraded further into small acid-soluble oligonucleotides. This chain is Exodeoxyribonuclease 7 large subunit, found in Vesicomyosocius okutanii subsp. Calyptogena okutanii (strain HA).